Consider the following 205-residue polypeptide: Iron-sulfur assembly protein 2 (205 aa).

3 residues coordinate Fe cation: Cys131, Cys196, and Cys198.

This sequence belongs to the HesB/IscA family.

It localises to the mitochondrion matrix. Involved in the assembly of mitochondrial and cytoplasmic iron-sulfur proteins. Probably involved in the binding of an intermediate of Fe/S cluster assembly. The protein is Iron-sulfur assembly protein 2 (isa2) of Schizosaccharomyces pombe (strain 972 / ATCC 24843) (Fission yeast).